A 522-amino-acid chain; its full sequence is MALMSQAGSSHCIYSEKMKCISGHSSITSNMEMLKMKDICFGNISSRNSSKPMQGIYLDRVGVERRRGRLAIVAASPPTEDAVVAAEPLTKEDLVAYLASGCKSKEKWRIGTEHEKFGFEFGTLRPMKYEQIAELLNGIAERFDWEKVMEGDNIIGLKQGKQSISLEPGGQFELSGAPLETLHQTCAEVNSHLYQVKAVAEEMGIGFLGTGFQPKWGLKDIPVMPKGRYEIMRNYMPKVGSLGLDMMFRTCTVQVNLDFSSEADMIRKFRAGLALQPIATALFANSPFTEGKPNGYLSMRSHIWTDTDNNRAGMLPFVFDDSFGFEQYVDYALDVPMYFVYRKKKYIDCAGMSFRDFMNGKLSPIPGDYPTLNDWENHLTTIFPEVRLKRYLEMRGADGGPWRRLCALPAFWVGILYDEVSLQTVLDMTSDWTAEEREMLRNKVPTSGLKTPFRDGLLKHVAQDVVKLAKEGLERRGYKETGFLNEVTEVVRTGVTPAEKLLELYHGKWGRSVDPVFEELLY.

Residues 1–45 (MALMSQAGSSHCIYSEKMKCISGHSSITSNMEMLKMKDICFGNIS) constitute a chloroplast transit peptide. Cysteine 186 and cysteine 406 form a disulfide bridge.

The protein belongs to the carboxylate-amine ligase family. Glutamate--cysteine ligase type 2 subfamily. Homodimer or monomer when oxidized or reduced, respectively. In terms of processing, the Cys-186-Cys-406 disulfide bridge is known to modulate the enzyme activity according to the redox status. The oxidized form constitutes the active enzyme.

It is found in the plastid. The protein resides in the chloroplast. It catalyses the reaction L-cysteine + L-glutamate + ATP = gamma-L-glutamyl-L-cysteine + ADP + phosphate + H(+). Its pathway is sulfur metabolism; glutathione biosynthesis; glutathione from L-cysteine and L-glutamate: step 1/2. In Nicotiana tabacum (Common tobacco), this protein is Glutamate--cysteine ligase, chloroplastic (GSH1).